Here is a 136-residue protein sequence, read N- to C-terminus: Large ribosomal subunit protein uL16 (136 aa).

This sequence belongs to the universal ribosomal protein uL16 family. As to quaternary structure, part of the 50S ribosomal subunit.

Binds 23S rRNA and is also seen to make contacts with the A and possibly P site tRNAs. This chain is Large ribosomal subunit protein uL16, found in Pseudoalteromonas atlantica (strain T6c / ATCC BAA-1087).